Here is a 1250-residue protein sequence, read N- to C-terminus: Phospholipid-transporting ATPase IC (1250 aa).

Acidic residues-rich tracts occupy residues 1–13 (MDTD…EDDS) and 24–40 (SDDE…TDEP). The interval 1–52 (MDTDYESTYEDDSQVPNDDVVPYSDDETDDELDSPQTDEPEQNRRNVQAEQS) is disordered. Over 1 to 133 (MDTDYESTYE…VLLILQTIPQ (133 aa)) the chain is Cytoplasmic. Residues 134–154 (ISTVTWSTTLIPLLLVLGITA) form a helical membrane-spanning segment. Topologically, residues 155-338 (IKDLVDDIAR…TKIDYLMNYM (184 aa)) are exoplasmic loop. A helical transmembrane segment spans residues 339–359 (VYTIFVLLILAAAGLAIGQTF). At 360 to 385 (WEAKLGAANVSWYLYDGNNYSPSYRG) the chain is on the cytoplasmic side. The chain crosses the membrane as a helical span at residues 386-406 (FLAFWGYIIVLNTMVPISLYV). The Exoplasmic loop segment spans residues 407–956 (SVEVIRLGQS…KFLRYFFYKN (550 aa)). Aspartate 454 acts as the 4-aspartylphosphate intermediate in catalysis. Positions 454, 455, 456, 553, 594, 617, 650, 730, 731, 732, 865, and 871 each coordinate ATP. Aspartate 454 is a binding site for Mg(2+). Threonine 456 lines the Mg(2+) pocket. A Mg(2+)-binding site is contributed by aspartate 891. Residues asparagine 894 and aspartate 895 each coordinate ATP. Aspartate 895 lines the Mg(2+) pocket. A helical transmembrane segment spans residues 957-977 (FSFTLVHFWYSFFNGFSAQTV). Residues 978 to 980 (YED) lie on the Cytoplasmic side of the membrane. A helical membrane pass occupies residues 981–1001 (WFITLYNVLYSSLPVLLVGLL). Residues 1002 to 1034 (DQDVSDKLSLAFPRLYVPGQKDLLFNYKKFFLS) are Exoplasmic loop-facing. The chain crosses the membrane as a helical span at residues 1035-1055 (LFHGIVTSLIIFFIPYGAFLL). The Cytoplasmic portion of the chain corresponds to 1056-1069 (TMGQDGEAPSDYQS). A helical transmembrane segment spans residues 1070–1090 (FAVTTATALVITVNFQIGLDT). Residues 1091 to 1092 (SY) are Exoplasmic loop-facing. The chain crosses the membrane as a helical span at residues 1093-1113 (WTFVNAFSIFGSIAIYFGIMF). Residues 1114 to 1117 (DLHS) lie on the Cytoplasmic side of the membrane. A helical membrane pass occupies residues 1118–1138 (AGIHVLFPSMFIFTGAAPNAL). Residues 1139–1140 (RQ) lie on the Exoplasmic loop side of the membrane. The chain crosses the membrane as a helical span at residues 1141–1161 (PYLWLTIILTVAFCLLPIVAL). The Cytoplasmic portion of the chain corresponds to 1162–1250 (RFLAKTIWPS…AQITHFTPQT (89 aa)).

Belongs to the cation transport ATPase (P-type) (TC 3.A.3) family. Type IV subfamily. As to quaternary structure, component of a P4-ATPase flippase complex which consists of a catalytic alpha subunit and an accessory beta subunit. The flippase ATP8B1:TMEM30A complex can form an intermediate phosphoenzyme in vitro. Also interacts with beta subunit TMEM30B. Mg(2+) serves as cofactor.

The protein resides in the cell membrane. Its subcellular location is the apical cell membrane. The protein localises to the cell projection. It localises to the stereocilium. It is found in the endoplasmic reticulum. The protein resides in the golgi apparatus. The enzyme catalyses ATP + H2O + phospholipidSide 1 = ADP + phosphate + phospholipidSide 2.. The catalysed reaction is a 1,2-diacyl-sn-glycero-3-phospho-L-serine(out) + ATP + H2O = a 1,2-diacyl-sn-glycero-3-phospho-L-serine(in) + ADP + phosphate + H(+). In terms of biological role, catalytic component of a P4-ATPase flippase complex which catalyzes the hydrolysis of ATP coupled to the transport of aminophospholipids from the outer to the inner leaflet of various membranes and ensures the maintenance of asymmetric distribution of phospholipids. Phospholipid translocation also seems to be implicated in vesicle formation and in uptake of lipid signaling molecules. May also participate in the establishment of the canalicular membrane integrity by ensuring asymmetric distribution of phospholipids in the canicular membrane. The sequence is that of Phospholipid-transporting ATPase IC (atp8b1) from Xenopus tropicalis (Western clawed frog).